Here is a 121-residue protein sequence, read N- to C-terminus: UPF0102 protein XF_0554 (121 aa).

The protein belongs to the UPF0102 family.

The polypeptide is UPF0102 protein XF_0554 (Xylella fastidiosa (strain 9a5c)).